We begin with the raw amino-acid sequence, 86 residues long: Defensin-like SRCA-homolog protein (86 aa).

Positions M1–A26 are cleaved as a signal peptide. Intrachain disulfides connect C32–C84, C42–C70, C52–C79, and C68–C81.

The protein belongs to the DEFL family.

It localises to the secreted. In terms of biological role, involved in male-mediated self-incompatibility. The sequence is that of Defensin-like SRCA-homolog protein (SCR37) from Arabidopsis lyrata (Lyre-leaved rock-cress).